A 645-amino-acid polypeptide reads, in one-letter code: Cysteine-rich receptor-like protein kinase 19 (645 aa).

The N-terminal stretch at 1 to 20 (MSSLISFIFLFLFSSITASA) is a signal peptide. At 21–262 (QNTFYLYHNC…PRPGKGGNSS (242 aa)) the chain is on the extracellular side. 2 consecutive Gnk2-homologous domains span residues 24 to 129 (FYLY…NRNI) and 135 to 239 (TDGG…NYAF). 7 N-linked (GlcNAc...) asparagine glycosylation sites follow: N29, N39, N57, N101, N185, N241, and N260. Residues 263–283 (VIIIAVVVPITVLFLLLVAVF) traverse the membrane as a helical segment. Residues 284–645 (SVRAKNKRTL…EASITRVTPR (362 aa)) are Cytoplasmic-facing. Positions 326 to 603 (FLPINKLGQG…IVQMLTTSLI (278 aa)) constitute a Protein kinase domain. ATP contacts are provided by residues 332–340 (LGQGGFGEV) and K354. A Phosphotyrosine modification is found at Y399. D451 (proton acceptor) is an active-site residue. At T491 the chain carries Phosphothreonine. Phosphotyrosine is present on Y499. Residues 616-645 (RSKQEQAGPSIDSSTHCSVDEASITRVTPR) form a disordered region. Polar residues predominate over residues 620-632 (EQAGPSIDSSTHC).

The protein belongs to the protein kinase superfamily. Ser/Thr protein kinase family. CRK subfamily. As to quaternary structure, interacts with MWL1.

It localises to the membrane. It carries out the reaction L-seryl-[protein] + ATP = O-phospho-L-seryl-[protein] + ADP + H(+). The enzyme catalyses L-threonyl-[protein] + ATP = O-phospho-L-threonyl-[protein] + ADP + H(+). This Arabidopsis thaliana (Mouse-ear cress) protein is Cysteine-rich receptor-like protein kinase 19 (CRK19).